Reading from the N-terminus, the 662-residue chain is MSQRNSPFKRRQSISNKSATGDVETTTTTPTPTTTTTTTSSLSSSTSSTIQRQPMKIESKISFNFKKRKDPNDNETDNIKLDNEKTFSNKNENNSLPINQLIQLSIDHNNNNNNNNNNNNNNNNNNNNNNNNNNNNNNNNNNNNNNNNNNNNNNNNNNNNNDTQKGTNKNENNCTDSNKKDLSTSTTSSSETGSSTKIKNEAKTPQSCLKKSNNNNNDNNNNNNRKTPRSTKKVKYHENITNDPNFKEENIEKQIKNDTKEIKENIDNKENNLESQIVNINQSTTPIETTSVTSTTSTATTTTTTPIPNEIPPPQQTQPTREKITPSAESKERMILLRNILIEKLKDTPQHLKKHVREINKLFLLQVLKIPIPKEDEQKSIIKKEQQEQQKKLQQQQQQISLANAQSSFLNKPTNNTETPTTTTTTTTTTTTTPSQPIQMPIESIGNLKNLEVLMRIHTLKMLIEKWSEEEKKWKTLLKEYSSNGKESIILQTPSRTKIAATNSIQNSIKKQQKPTKSSSSTSIQQNNQEENDKNINNNNNNNNNNNNSNNVNNNNNNNNNNNNNNNNNNNNNNNQMVSPIISDDPKMIQITNSISKLSIQLDEVKPRLKQVEQNSIDIEKFYDETSVYYQKQSLKNLKDVDNPKKLIKNLLSNNTISLSNK.

Disordered stretches follow at residues 1–94 (MSQR…NENN), 107–237 (DHNN…VKYH), 288–328 (ETTS…TPSA), 406–440 (QSSFLNKPTNNTETPTTTTTTTTTTTTTPSQPIQM), and 506–580 (QNSI…MVSP). Positions 25-49 (TTTTTPTPTTTTTTTSSLSSSTSST) are enriched in low complexity. Residues 77–87 (DNIKLDNEKTF) show a composition bias toward basic and acidic residues. The segment covering 109-161 (NNNNNNNNNNNNNNNNNNNNNNNNNNNNNNNNNNNNNNNNNNNNNNNNNNNNN) has biased composition (low complexity). A compositionally biased stretch (polar residues) spans 162–176 (DTQKGTNKNENNCTD). Low complexity predominate over residues 183–196 (STSTTSSSETGSST). Over residues 203–212 (KTPQSCLKKS) the composition is skewed to polar residues. Positions 213 to 224 (NNNNNDNNNNNN) are enriched in low complexity. Residues 226-235 (KTPRSTKKVK) are compositionally biased toward basic residues. Composition is skewed to low complexity over residues 288-308 (ETTSVTSTTSTATTTTTTPIP), 413-434 (PTNNTETPTTTTTTTTTTTTTP), 515-526 (PTKSSSSTSIQQ), and 535-575 (NINN…NNNN).

This is an uncharacterized protein from Dictyostelium discoideum (Social amoeba).